Reading from the N-terminus, the 629-residue chain is LEAF RUST 10 DISEASE-RESISTANCE LOCUS RECEPTOR-LIKE PROTEIN KINASE-like 1.1 (629 aa).

The signal sequence occupies residues 1–19; it reads METVSVLLFFFLFLLAAEA. At 20-225 the chain is on the extracellular side; it reads RSTKRTGCKD…PNNYHAEMRL (206 aa). 6 N-linked (GlcNAc...) asparagine glycosylation sites follow: Asn-56, Asn-92, Asn-123, Asn-124, Asn-172, and Asn-177. The helical transmembrane segment at 226–246 threads the bilayer; it reads GLGIGGSVILIIILVALFAVI. The Cytoplasmic segment spans residues 247–629; sequence HRNYRRKDGS…TTPNTSAYEF (383 aa). Residues 291 to 565 enclose the Protein kinase domain; the sequence is FSKDRLLGDG…TMEQVVHELK (275 aa). ATP-binding positions include 297–305 and Lys-319; that span reads LGDGGFGTV. Tyr-365 is modified (phosphotyrosine). Asp-416 serves as the catalytic Proton acceptor. Position 449 is a phosphoserine (Ser-449). Thr-450 and Thr-455 each carry phosphothreonine. At Tyr-463 the chain carries Phosphotyrosine. Positions 609-629 are disordered; the sequence is VSVTDQWTSKSTTPNTSAYEF.

This sequence belongs to the protein kinase superfamily. Ser/Thr protein kinase family.

It localises to the cell membrane. The catalysed reaction is L-seryl-[protein] + ATP = O-phospho-L-seryl-[protein] + ADP + H(+). The enzyme catalyses L-threonyl-[protein] + ATP = O-phospho-L-threonyl-[protein] + ADP + H(+). This is LEAF RUST 10 DISEASE-RESISTANCE LOCUS RECEPTOR-LIKE PROTEIN KINASE-like 1.1 from Arabidopsis thaliana (Mouse-ear cress).